The primary structure comprises 278 residues: TnpB-like protein MJ0751 (278 aa).

Residues Cys-222, Cys-225, Cys-239, and Cys-242 each coordinate Zn(2+).

In the N-terminal section; belongs to the transposase 2 family. It in the C-terminal section; belongs to the transposase 35 family.

The chain is TnpB-like protein MJ0751 from Methanocaldococcus jannaschii (strain ATCC 43067 / DSM 2661 / JAL-1 / JCM 10045 / NBRC 100440) (Methanococcus jannaschii).